The sequence spans 368 residues: Quinolinate synthase (368 aa).

The iminosuccinate site is built by H46 and S63. Position 110 (C110) interacts with [4Fe-4S] cluster. Residues 141–143 (YVN) and S162 each bind iminosuccinate. C230 contacts [4Fe-4S] cluster. Iminosuccinate-binding positions include 256–258 (HPE) and T273. C320 is a binding site for [4Fe-4S] cluster.

The protein belongs to the quinolinate synthase family. Type 3 subfamily. [4Fe-4S] cluster is required as a cofactor.

It localises to the cytoplasm. It carries out the reaction iminosuccinate + dihydroxyacetone phosphate = quinolinate + phosphate + 2 H2O + H(+). Its pathway is cofactor biosynthesis; NAD(+) biosynthesis; quinolinate from iminoaspartate: step 1/1. Functionally, catalyzes the condensation of iminoaspartate with dihydroxyacetone phosphate to form quinolinate. This chain is Quinolinate synthase, found in Bacillus cereus (strain G9842).